Here is a 349-residue protein sequence, read N- to C-terminus: Small ribosomal subunit biogenesis GTPase RsgA (349 aa).

Positions M1 to E38 are disordered. One can recognise a CP-type G domain in the interval T102–F272. GTP-binding positions include N158–D161 and G212–S220. Residues C296, C301, H303, and C309 each coordinate Zn(2+).

It belongs to the TRAFAC class YlqF/YawG GTPase family. RsgA subfamily. As to quaternary structure, monomer. Associates with 30S ribosomal subunit, binds 16S rRNA. Zn(2+) is required as a cofactor.

It is found in the cytoplasm. In terms of biological role, one of several proteins that assist in the late maturation steps of the functional core of the 30S ribosomal subunit. Helps release RbfA from mature subunits. May play a role in the assembly of ribosomal proteins into the subunit. Circularly permuted GTPase that catalyzes slow GTP hydrolysis, GTPase activity is stimulated by the 30S ribosomal subunit. This is Small ribosomal subunit biogenesis GTPase RsgA from Serratia proteamaculans (strain 568).